The primary structure comprises 394 residues: Phosphoglycerate kinase (394 aa).

Substrate is bound by residues 21–23, Arg-36, 59–62, Arg-118, and Arg-151; these read DFN and HLGR. Ser-183 is subject to Phosphoserine. The ATP site is built by Lys-201 and Gly-292. Position 299 is a phosphothreonine (Thr-299). ATP contacts are provided by residues Glu-323 and 350–353; that span reads GGDS.

The protein belongs to the phosphoglycerate kinase family. Monomer.

The protein localises to the cytoplasm. The enzyme catalyses (2R)-3-phosphoglycerate + ATP = (2R)-3-phospho-glyceroyl phosphate + ADP. It functions in the pathway carbohydrate degradation; glycolysis; pyruvate from D-glyceraldehyde 3-phosphate: step 2/5. This chain is Phosphoglycerate kinase, found in Bacillus cereus (strain B4264).